Reading from the N-terminus, the 97-residue chain is MTAKGQMLQDPFLNALRKEHVPVSIYLVNGIKLQGQVESFDQYVVLLRNTSVTQMVYKHAISTIVPARSVNLQHENRPQAAPASTLVQVETVQQPAE.

The Sm domain occupies 10-70; the sequence is DPFLNALRKE…ISTIVPARSV (61 aa). A disordered region spans residues 75 to 97; that stretch reads ENRPQAAPASTLVQVETVQQPAE. Residues 85 to 97 show a composition bias toward polar residues; that stretch reads TLVQVETVQQPAE.

It belongs to the Hfq family. As to quaternary structure, homohexamer.

Its function is as follows. RNA chaperone that binds small regulatory RNA (sRNAs) and mRNAs to facilitate mRNA translational regulation in response to envelope stress, environmental stress and changes in metabolite concentrations. Also binds with high specificity to tRNAs. The protein is RNA-binding protein Hfq of Neisseria meningitidis serogroup C / serotype 2a (strain ATCC 700532 / DSM 15464 / FAM18).